A 158-amino-acid chain; its full sequence is MMMDILMYLFETYIHSDSELQVDQDELEDELLRAGFHQDDIYKALHWLEDLAALQDTENQAAITMCSNTSMRIYTSREISRINMECRGFLLFLEQINVLTTEIREMVIDRVMGLETSEFELDDLKWIILMVLFNVPGNESAYTQMEELLYTKEQGILH.

Belongs to the Smg family.

This is Protein Smg homolog from Vibrio atlanticus (strain LGP32) (Vibrio splendidus (strain Mel32)).